Reading from the N-terminus, the 338-residue chain is Glycerol-3-phosphate dehydrogenase [NAD(P)+] (338 aa).

NADPH-binding residues include S13, W14, and K108. Residues K108, G139, and S141 each contribute to the sn-glycerol 3-phosphate site. Residue A143 coordinates NADPH. The sn-glycerol 3-phosphate site is built by K194, D247, S257, R258, and N259. K194 (proton acceptor) is an active-site residue. R258 lines the NADPH pocket. Positions 282 and 284 each coordinate NADPH.

Belongs to the NAD-dependent glycerol-3-phosphate dehydrogenase family.

The protein localises to the cytoplasm. The enzyme catalyses sn-glycerol 3-phosphate + NAD(+) = dihydroxyacetone phosphate + NADH + H(+). It carries out the reaction sn-glycerol 3-phosphate + NADP(+) = dihydroxyacetone phosphate + NADPH + H(+). It functions in the pathway membrane lipid metabolism; glycerophospholipid metabolism. In terms of biological role, catalyzes the reduction of the glycolytic intermediate dihydroxyacetone phosphate (DHAP) to sn-glycerol 3-phosphate (G3P), the key precursor for phospholipid synthesis. The protein is Glycerol-3-phosphate dehydrogenase [NAD(P)+] of Streptococcus pneumoniae (strain Taiwan19F-14).